A 276-amino-acid chain; its full sequence is Large ribosomal subunit protein uL2 (276 aa).

The interval arginine 221 to lysine 276 is disordered. The segment covering lysine 252–lysine 263 has biased composition (basic residues).

This sequence belongs to the universal ribosomal protein uL2 family. Part of the 50S ribosomal subunit. Forms a bridge to the 30S subunit in the 70S ribosome.

Its function is as follows. One of the primary rRNA binding proteins. Required for association of the 30S and 50S subunits to form the 70S ribosome, for tRNA binding and peptide bond formation. It has been suggested to have peptidyltransferase activity; this is somewhat controversial. Makes several contacts with the 16S rRNA in the 70S ribosome. This chain is Large ribosomal subunit protein uL2, found in Phytoplasma australiense.